The primary structure comprises 368 residues: uncharacterized protein (368 aa).

The signal sequence occupies residues 1 to 19; that stretch reads MHVSMIIFVSIFSIKYIMA. Residues N99, N170, N266, and N295 are each glycosylated (N-linked (GlcNAc...) asparagine; by host).

This is an uncharacterized protein from Ostreid herpesvirus 1 (isolate France) (OsHV-1).